The chain runs to 1102 residues: Putative helicase/primase complex protein (1102 aa).

Disordered regions lie at residues 1031–1057 (TKEEISSTKEETYSTKEETYSTKEETC) and 1082–1102 (EETCSIKEETSSIKEETFTET).

Belongs to the asfivirus F1055L family.

Functionally, may be involved in DNA replication. In African swine fever virus (isolate Tick/Malawi/Lil 20-1/1983) (ASFV), this protein is Putative helicase/primase complex protein.